Reading from the N-terminus, the 187-residue chain is dTTP/UTP pyrophosphatase (187 aa).

Asp-68 (proton acceptor) is an active-site residue.

It belongs to the Maf family. YhdE subfamily. The cofactor is a divalent metal cation.

It localises to the cytoplasm. The enzyme catalyses dTTP + H2O = dTMP + diphosphate + H(+). It catalyses the reaction UTP + H2O = UMP + diphosphate + H(+). Functionally, nucleoside triphosphate pyrophosphatase that hydrolyzes dTTP and UTP. May have a dual role in cell division arrest and in preventing the incorporation of modified nucleotides into cellular nucleic acids. This is dTTP/UTP pyrophosphatase from Thermus thermophilus (strain ATCC BAA-163 / DSM 7039 / HB27).